We begin with the raw amino-acid sequence, 515 residues long: Tabersonine 6,7-epoxidase isoform 2 (515 aa).

The helical transmembrane segment at 1–21 (MEFVVSPFAFLIFFFILLKMI) threads the bilayer. N-linked (GlcNAc...) asparagine glycosylation is found at asparagine 173, asparagine 259, and asparagine 352. Cysteine 449 provides a ligand contact to heme.

Belongs to the cytochrome P450 family. The cofactor is heme. In terms of tissue distribution, mainly expressed in aerial organs, including stems, leaves and flowers.

The protein resides in the endoplasmic reticulum membrane. The catalysed reaction is (-)-tabersonine + reduced [NADPH--hemoprotein reductase] + O2 = lochnericine + oxidized [NADPH--hemoprotein reductase] + H2O + H(+). It functions in the pathway alkaloid biosynthesis. Its function is as follows. Component of the monoterpenoid indole alkaloids (MIAs, e.g. echitovenine, tabersonine, lochnericine, 19-hydroxytabersonine and horhammericine) biosynthetic pathway; MIAs are used in cancer treatment and other medical applications. Cytochrome P450 catalyzing the conversion of tabersonine to lochnericine. The sequence is that of Tabersonine 6,7-epoxidase isoform 2 from Catharanthus roseus (Madagascar periwinkle).